The primary structure comprises 440 residues: MGSSHLLNKGLPLGVRPPIMNGPLHPRPLVALLDGRDCTVEMPILKDVATVAFCDAQSTQEIHEKVLNEAVGALMYHTITLTREDLEKFKALRIIVRIGSGFDNIDIKSAGDLGIAVCNVPAASVEETADSTLCHILNLYRRATWLHQALREGTRVQSVEQIREVASGAARIRGETLGIIGLGRVGQAVALRAKAFGFNVLFYDPYLSDGVERALGLQRVSTLQDLLFHSDCVTLHCGLNEHNHHLINDFTVKQMRQGAFLVNTARGGLVDEKALAQALKEGRIRGAALDVHESEPFSFSQGPLKDAPNLICTPHAAWYSEQASIEMREEAAREIRRAITGRIPDSLKNCVNKDHLTAATHWASMDPAVVHPELNGAAYRYPPGVVGVAPTGIPAAVEGIVPSAMSLSHGLPPVAHPPHAPSPGQTVKPEADRDHASDQL.

Residues M1–A70 are interaction with GLIS2 1. Residues S100, I180 to V185, D204, C237 to N243, T264 to R266, and D290 contribute to the NAD(+) site. R266 is an active-site residue. Residues A288 to T360 are interaction with GLIS2 2. The active site involves E295. At S300 the chain carries Phosphoserine. Catalysis depends on H315, which acts as the Proton donor. H315–W318 contributes to the NAD(+) binding site. A disordered region spans residues S408–L440. At S422 the chain carries Phosphoserine; by HIPK2. A Glycyl lysine isopeptide (Lys-Gly) (interchain with G-Cter in SUMO) cross-link involves residue K428. Basic and acidic residues predominate over residues P429–L440.

Belongs to the D-isomer specific 2-hydroxyacid dehydrogenase family. Homo- or heterodimer. Heterodimer with CTBP2. Interacts with PRDM16; the interaction represses white adipose tissue (WAT)-specific genes expression. Interacts with GLIS2, FOXP2, HDAC4, HDAC5, HDAC9 and ZNF217. Interacts with ELK3 (via its PXDLS motif). Interacts with RBBP8 (via its PXDLS motif); the interaction is disrupted by binding to adenovirus E1A. Interacts with FOXP1, HIPK2, PNN, NRIP1, MECOM, ZFHX1B and WIZ. Interacts with ZNF366 (via PXDLS motif). Interaction with SATB1 (non-acetylated form); the interaction stabilizes its attachment to DNA and promotes transcription repression. Interacts with BCL6; the interaction is required for BCL6 transcriptional autoinhibition and inhibition of some BCL6 target genes. Interacts with IKZF4. Interacts with MCRIP1 (unphosphorylated form, via the PXDLS motif); competitively inhibiting CTBP-ZEB1 interaction. Interacts with Bassoon/BSN; this interaction targets and anchors CTBP1 to presynapses. Interacts with SIMC1. As to quaternary structure, (Microbial infection) Interacts with Epstein-Barr virus EBNA3. Interacts with Epstein-Barr virus EBNA6; this interaction leads to gene repression, but also seems to interfere with the repressive function of CtBP pre-bound to DNA, leading to EBNA6 mediated up-regulation of many cellular genes. In terms of assembly, (Microbial infection) Interacts with adenovirus E1A protein (via its C-terminus); the interaction disrupts the interaction of CTBP1 with RBBP8. (Microbial infection) Interacts with human adenovirus 5 E1A protein; this interaction seems to potentiate viral replication. Requires NAD(+) as cofactor. The level of phosphorylation appears to be regulated during the cell cycle. Phosphorylation by HIPK2 on Ser-422 induces proteasomal degradation. In terms of processing, ADP-ribosylated; when cells are exposed to brefeldin A. Post-translationally, sumoylation on Lys-428 is promoted by the E3 SUMO-protein ligase CBX4. As to expression, expressed in germinal center B-cells.

It localises to the cytoplasm. The protein resides in the nucleus. Functionally, corepressor targeting diverse transcription regulators such as GLIS2 or BCL6. Has dehydrogenase activity. Involved in controlling the equilibrium between tubular and stacked structures in the Golgi complex. Functions in brown adipose tissue (BAT) differentiation. This Homo sapiens (Human) protein is C-terminal-binding protein 1 (CTBP1).